Reading from the N-terminus, the 415-residue chain is Serine hydroxymethyltransferase (415 aa).

(6S)-5,6,7,8-tetrahydrofolate is bound by residues L121 and 125–127 (GHL). At K229 the chain carries N6-(pyridoxal phosphate)lysine. 352–354 (SPF) lines the (6S)-5,6,7,8-tetrahydrofolate pocket.

Belongs to the SHMT family. Homodimer. It depends on pyridoxal 5'-phosphate as a cofactor.

The protein resides in the cytoplasm. It catalyses the reaction (6R)-5,10-methylene-5,6,7,8-tetrahydrofolate + glycine + H2O = (6S)-5,6,7,8-tetrahydrofolate + L-serine. It participates in one-carbon metabolism; tetrahydrofolate interconversion. The protein operates within amino-acid biosynthesis; glycine biosynthesis; glycine from L-serine: step 1/1. Functionally, catalyzes the reversible interconversion of serine and glycine with tetrahydrofolate (THF) serving as the one-carbon carrier. This reaction serves as the major source of one-carbon groups required for the biosynthesis of purines, thymidylate, methionine, and other important biomolecules. Also exhibits THF-independent aldolase activity toward beta-hydroxyamino acids, producing glycine and aldehydes, via a retro-aldol mechanism. This Methylobacillus flagellatus (strain ATCC 51484 / DSM 6875 / VKM B-1610 / KT) protein is Serine hydroxymethyltransferase.